Consider the following 197-residue polypeptide: Histocompatibility antigen 60c (197 aa).

Residues 1–17 (MALLLLILESCSAGTYA) form the signal peptide. 3 N-linked (GlcNAc...) asparagine glycosylation sites follow: Asn51, Asn81, and Asn114. Ser177 carries GPI-anchor amidated serine lipidation. A propeptide spans 178-197 (MACKSSPFDGLIMILLIYIL) (removed in mature form).

It belongs to the NKG2D ligand family. Expressed in skin, and weakly in large intestine.

It is found in the cell membrane. In terms of biological role, ligand for the KLRK1 immunosurveillance receptor. Binding to KLRK1 stimulates cell lysis in vitro. The polypeptide is Histocompatibility antigen 60c (Mus musculus (Mouse)).